The sequence spans 1204 residues: MEQAPNMAEPRGPVDHGVQIRFITEPVSGAEMGTLRRGGRRPAKDARASTYGVAVRVQGIAGQPFVVLNSGEKGGDSFGVQIKGASDQGASGALSSDSELPENPYSQVQGFPAPSQSSTSDEDPGAQWNGKLLRSQSQASLAGPGPVDPSNRSTSMLDLAPKVASPGSTIDTAPLSSVDSLINKFDGQLGGQARGRTGRRTRMLPPEQRKRSKSLDSRLPRDTLEERERQSTNHWNPSTKYNNHVGSLKQPAQSPSPSPLSGFSRARQTQDWVLQSFEEPRGRAQDPTMLQFKSTPDLLRDQQEAAPPGSVDHMKATIYGILREGSSESEASVRRKVSLVLEKMQPLGVISSGSSKAMAGQGELARKVEELQRKLDDEVKKRQKLEPSRAGLERQLEEKTEECSQLQELLERREGEAQQSSKELQNMKRLLDQGESLQHGLETQVMELQSKLKQVQGPEPAKELLLKDLLETRELLEEVLEGKQRVEEQLRLRERELTALKGALKEEVASRDQEVEHVRQQCQRDTEQLRKSMQDASQDHAVLEAERQKMSALVRGLQRELEETSEETGHWQSMFQKNKEELRATKQELLQLRMEKEEMEEELGEKIEALQRELEQARASAGDARQVEVLKKELRRAQEELEELQAERQSQEVAGRHRDRELEKQLAGLRVEADRGRELEEQNFQLQKTLQQLRHDCEEASKARGMAAEAEATVLGQRRGAVEAALRETQGDNDELRRRVLGLEQQLRETRGLVDGGEAAEARLRDKLQRLEADKQRLEEALNASQEEEGSLAAAKRALEARLEEAQRGLARLGQEQQTLTRALEEEGKQREALRRSKAELEEQKRLLDRTVDRLNEELEQIGEASKQALQQLQAQLEEYKEKARREVADAQRQAKDWASEAEKSSGGLNRLQDEIQRLRQALQACQAERDTAQLDKELLAQRLQGLEQEAENKKRSQDDRARQLKGLEEKVSRLEAELDEEKNTVELLTDRVNRGRDQVDQLRTELMQERSARQDLECDKISLERQNKDLKTRLASSEGFQKPSASLSQLESQNQLLQERLQAEEREKTVLQSTNRKLERKVKELSIQIEDERQHVNDQKDQLSLRVKAFFRQVDEAEEEIERLDSLRRKAQRELEEQHEVNGQLQARVKSLEKDSWRKASRSAAESALKHEGLSSDEEFDSVYDPSSIASLLTESNLQTSSC.

Residues 7–357 (MAEPRGPVDH…GVISSGSSKA (351 aa)) are head. Positions 25–48 (EPVSGAEMGTLRRGGRRPAKDARA) are disordered. Residues 48–62 (ASTYGVAVRVQGIAG) carry the ZIM motif. The segment at 54–67 (AVRVQGIAGQPFVV) is interaction with TJP1/ZO1. Disordered regions lie at residues 68–174 (LNSG…DTAP) and 186–266 (DGQL…FSRA). Positions 93-119 (ALSSDSELPENPYSQVQGFPAPSQSST) are enriched in polar residues. Residues Ser-95, Ser-96, Ser-98, Ser-135, Ser-137, Ser-140, Ser-155, Ser-165, Ser-214, and Ser-217 each carry the phosphoserine modification. Residues 207-231 (EQRKRSKSLDSRLPRDTLEERERQS) are compositionally biased toward basic and acidic residues. Over residues 232 to 245 (TNHWNPSTKYNNHV) the composition is skewed to polar residues. Low complexity predominate over residues 247–261 (SLKQPAQSPSPSPLS). 4 positions are modified to phosphoserine: Ser-258, Ser-276, Ser-338, and Ser-351. Residues 358–1161 (MAGQGELARK…SLEKDSWRKA (804 aa)) adopt a coiled-coil conformation. Positions 379 to 398 (VKKRQKLEPSRAGLERQLEE) are disordered. The residue at position 579 (Lys-579) is an N6-acetyllysine. Residues 1161-1182 (ASRSAAESALKHEGLSSDEEFD) form a disordered region. The tail stretch occupies residues 1162-1204 (SRSAAESALKHEGLSSDEEFDSVYDPSSIASLLTESNLQTSSC). Phosphoserine is present on residues Ser-1176, Ser-1177, and Ser-1183.

Belongs to the cingulin family. Homodimer. Interacts with TJP1/ZO1 and SPEF1.

It localises to the cell junction. It is found in the tight junction. Probably plays a role in the formation and regulation of the tight junction (TJ) paracellular permeability barrier. The sequence is that of Cingulin from Plecturocebus moloch (Dusky titi monkey).